A 219-amino-acid polypeptide reads, in one-letter code: Ribose-5-phosphate isomerase A (219 aa).

Substrate is bound by residues 28 to 31 (TGST), 81 to 84 (DGAD), and 94 to 97 (KGGG). E103 functions as the Proton acceptor in the catalytic mechanism. K121 contributes to the substrate binding site.

It belongs to the ribose 5-phosphate isomerase family. As to quaternary structure, homodimer.

It carries out the reaction aldehydo-D-ribose 5-phosphate = D-ribulose 5-phosphate. It participates in carbohydrate degradation; pentose phosphate pathway; D-ribose 5-phosphate from D-ribulose 5-phosphate (non-oxidative stage): step 1/1. Catalyzes the reversible conversion of ribose-5-phosphate to ribulose 5-phosphate. In Erwinia tasmaniensis (strain DSM 17950 / CFBP 7177 / CIP 109463 / NCPPB 4357 / Et1/99), this protein is Ribose-5-phosphate isomerase A.